Consider the following 300-residue polypeptide: Acetylglutamate kinase (300 aa).

Residues 68–69, Arg90, and Asn194 each bind substrate; that span reads GG.

The protein belongs to the acetylglutamate kinase family. ArgB subfamily.

The protein resides in the cytoplasm. It catalyses the reaction N-acetyl-L-glutamate + ATP = N-acetyl-L-glutamyl 5-phosphate + ADP. Its pathway is amino-acid biosynthesis; L-arginine biosynthesis; N(2)-acetyl-L-ornithine from L-glutamate: step 2/4. In terms of biological role, catalyzes the ATP-dependent phosphorylation of N-acetyl-L-glutamate. The protein is Acetylglutamate kinase of Methanocaldococcus jannaschii (strain ATCC 43067 / DSM 2661 / JAL-1 / JCM 10045 / NBRC 100440) (Methanococcus jannaschii).